The primary structure comprises 504 residues: D-alanine--D-alanyl carrier protein ligase (504 aa).

Residue T152–S153 coordinates ATP. D-alanine is bound at residue D197. N292–T297 provides a ligand contact to ATP. V301 serves as a coordination point for D-alanine. ATP contacts are provided by residues D383, Y394 to R397, and K492. K492 serves as a coordination point for D-alanine.

Belongs to the ATP-dependent AMP-binding enzyme family. DltA subfamily.

Its subcellular location is the cytoplasm. It carries out the reaction holo-[D-alanyl-carrier protein] + D-alanine + ATP = D-alanyl-[D-alanyl-carrier protein] + AMP + diphosphate. Its pathway is cell wall biogenesis; lipoteichoic acid biosynthesis. In terms of biological role, catalyzes the first step in the D-alanylation of lipoteichoic acid (LTA), the activation of D-alanine and its transfer onto the D-alanyl carrier protein (Dcp) DltC. In an ATP-dependent two-step reaction, forms a high energy D-alanyl-AMP intermediate, followed by transfer of the D-alanyl residue as a thiol ester to the phosphopantheinyl prosthetic group of the Dcp. D-alanylation of LTA plays an important role in modulating the properties of the cell wall in Gram-positive bacteria, influencing the net charge of the cell wall. This chain is D-alanine--D-alanyl carrier protein ligase, found in Bacillus mycoides (strain KBAB4) (Bacillus weihenstephanensis).